A 502-amino-acid polypeptide reads, in one-letter code: Hexokinase-9 (502 aa).

Residues 5–24 (AALASAAMAAAAVAVVSTVL) form a helical membrane-spanning segment. The Hexokinase domain maps to 37–488 (RAEAVLLRDL…SGVGAALLAA (452 aa)). Residues 92–230 (SGGEKGMFYA…GLDMKVTALV (139 aa)) form a hexokinase small subdomain region. ADP-binding residues include Gly106, Thr107, and Asn108. The D-glucose site is built by Thr196, Lys197, Asn231, and Asp232. The hexokinase large subdomain stretch occupies residues 231–477 (NDTVGTLAAG…PSVMIKHVND (247 aa)). Residue Thr255 participates in ADP binding. Residues Asn258, Glu286, and Glu317 each contribute to the D-glucose site. Position 442 (Gly442) interacts with ADP.

Belongs to the hexokinase family. In terms of tissue distribution, expressed in roots, leaves, flowers, immature seeds, endosperm and seed coat.

Its subcellular location is the plastid. The protein localises to the chloroplast outer membrane. The enzyme catalyses a D-hexose + ATP = a D-hexose 6-phosphate + ADP + H(+). The catalysed reaction is D-fructose + ATP = D-fructose 6-phosphate + ADP + H(+). It carries out the reaction D-glucose + ATP = D-glucose 6-phosphate + ADP + H(+). The protein operates within carbohydrate metabolism; hexose metabolism. It participates in carbohydrate degradation; glycolysis; D-glyceraldehyde 3-phosphate and glycerone phosphate from D-glucose: step 1/4. Functionally, fructose and glucose phosphorylating enzyme. In Oryza sativa subsp. japonica (Rice), this protein is Hexokinase-9 (HXK9).